Here is a 230-residue protein sequence, read N- to C-terminus: Large ribosomal subunit protein uL1 (230 aa).

Belongs to the universal ribosomal protein uL1 family. In terms of assembly, part of the 50S ribosomal subunit.

Functionally, binds directly to 23S rRNA. The L1 stalk is quite mobile in the ribosome, and is involved in E site tRNA release. In terms of biological role, protein L1 is also a translational repressor protein, it controls the translation of the L11 operon by binding to its mRNA. In Leptospira borgpetersenii serovar Hardjo-bovis (strain JB197), this protein is Large ribosomal subunit protein uL1.